Here is a 215-residue protein sequence, read N- to C-terminus: Pyrrolidone-carboxylate peptidase (215 aa).

Active-site residues include Glu78, Cys141, and His165.

It belongs to the peptidase C15 family. In terms of assembly, homotetramer.

It is found in the cytoplasm. It carries out the reaction Release of an N-terminal pyroglutamyl group from a polypeptide, the second amino acid generally not being Pro.. Functionally, removes 5-oxoproline from various penultimate amino acid residues except L-proline. In Streptococcus suis (strain 98HAH33), this protein is Pyrrolidone-carboxylate peptidase.